The primary structure comprises 467 residues: Xanthan biosynthesis protein XanB (467 aa).

It belongs to the mannose-6-phosphate isomerase type 2 family.

It carries out the reaction D-mannose 6-phosphate = D-fructose 6-phosphate. The catalysed reaction is alpha-D-mannose 1-phosphate + GTP + H(+) = GDP-alpha-D-mannose + diphosphate. It functions in the pathway nucleotide-sugar biosynthesis; GDP-alpha-D-mannose biosynthesis; GDP-alpha-D-mannose from alpha-D-mannose 1-phosphate (GTP route): step 1/1. Its pathway is nucleotide-sugar biosynthesis; GDP-alpha-D-mannose biosynthesis; alpha-D-mannose 1-phosphate from D-fructose 6-phosphate: step 1/2. Involved in xanthan production. The polypeptide is Xanthan biosynthesis protein XanB (xanB) (Xanthomonas campestris pv. campestris (strain B100)).